The following is a 134-amino-acid chain: Lymphocyte antigen 6I (134 aa).

A signal peptide spans 1–21; the sequence is MDTSHAIKSCVLILLVTLLCA. One can recognise a UPAR/Ly6 domain in the interval 27–105; it reads LECYQCYGVP…ISCCQEDLCN (79 aa). Disulfide bonds link cysteine 29-cysteine 53, cysteine 32-cysteine 41, cysteine 46-cysteine 74, cysteine 78-cysteine 98, and cysteine 99-cysteine 104. Asparagine 95 is a glycosylation site (N-linked (GlcNAc...) asparagine). A lipid anchor (GPI-anchor amidated glycine) is attached at glycine 112. The propeptide at 113-134 is removed in mature form; the sequence is SSWTTAGVLLFSLGSVLLQTLM.

Expressed in hematopoietic tissue (spleen, thymus, bone marrow). Also found in peritoneal macrophages, peripheral blood leukocytes, liver, heart, brain, kidney and lung.

The protein resides in the cell membrane. The sequence is that of Lymphocyte antigen 6I (Ly6i) from Mus musculus (Mouse).